The following is a 762-amino-acid chain: MSDASKRSLNPTLMMNNNNTLPKPLEESLDLKEFIALFKTFFAKERGSIALENDLKQAFTYLNEVDAIGLPAPKSVKESDLIVVKLTKLGTLHLDEIYEIVKRLRYIVVLQNAFKPFTHLKFHERLNAIILPPFFNDLILLLDDEGQIKQGANATLDALNESLNRLKKESTKIIHHYAHSKELAPYLVDTQSHLKHGYECLLLKSGFSSAIKGVVLERSANGYFYLLPESAQKIAQKIAQIGNEIDCCIVEMCQTLSRSLQKHLLFLKFLFKEFDFLDSLQARLNFAKAYNLEFVMPSFTQKKMILENFSHPILKEPKPLNLKFEKSMLAVTGVNAGGKTMLLKSLLSAAFLSKHLIPMKINAHHSTIPYFREIHAIINDPQNSANNISTFAGRMKQFSALLSKENMLLGVDEIELGTDADEASSLYKTLLEKLLKQNNQIVITTHHKRLSVLMAENKEVELLAALYDEEKERPTYTFLKGVIGKSYAFETALRYGVPPFLIEKAKAFYGEDKEKLNVLIENSSTLERELKQKNEHLENALKEQEDLKNAWLLEMEKQKEIFHHKKLELEKSYQQALNILKSEVASKDTSSMHKEIHKASEILNKHKTDQEIPQIITSFQINEKARYKNESVLVIQILDKGYYLVETELGMRLKAHGSWLKQIQKPPKNKFKPPKTIVPKPKEASLRLDLRGQRSEEALDLLDAFLNDALLGGFEEVLICHGKGSGILEKFVKEFLKNHPKVVSFSDAPINLGGSGVKIVKL.

Residue 333–340 (GVNAGGKT) coordinates ATP. In terms of domain architecture, Smr spans 688–762 (LDLRGQRSEE…GGSGVKIVKL (75 aa)).

It belongs to the DNA mismatch repair MutS family. MutS2 subfamily. In terms of assembly, homodimer. Binds to stalled ribosomes, contacting rRNA.

Its function is as follows. Endonuclease that is involved in the suppression of homologous recombination and thus may have a key role in the control of bacterial genetic diversity. Acts as a ribosome collision sensor, splitting the ribosome into its 2 subunits. Detects stalled/collided 70S ribosomes which it binds and splits by an ATP-hydrolysis driven conformational change. Acts upstream of the ribosome quality control system (RQC), a ribosome-associated complex that mediates the extraction of incompletely synthesized nascent chains from stalled ribosomes and their subsequent degradation. Probably generates substrates for RQC. The protein is Endonuclease MutS2 of Helicobacter pylori (strain J99 / ATCC 700824) (Campylobacter pylori J99).